A 948-amino-acid chain; its full sequence is RNA polymerase-associated protein RapA (948 aa).

The region spanning Glu-164–Asn-332 is the Helicase ATP-binding domain. Asp-177 to Thr-184 contacts ATP. The DEAH box motif lies at Asp-278–His-281. In terms of domain architecture, Helicase C-terminal spans Arg-473–His-627.

This sequence belongs to the SNF2/RAD54 helicase family. RapA subfamily. As to quaternary structure, interacts with the RNAP. Has a higher affinity for the core RNAP than for the holoenzyme. Its ATPase activity is stimulated by binding to RNAP.

Transcription regulator that activates transcription by stimulating RNA polymerase (RNAP) recycling in case of stress conditions such as supercoiled DNA or high salt concentrations. Probably acts by releasing the RNAP, when it is trapped or immobilized on tightly supercoiled DNA. Does not activate transcription on linear DNA. Probably not involved in DNA repair. In Pseudomonas savastanoi pv. phaseolicola (strain 1448A / Race 6) (Pseudomonas syringae pv. phaseolicola (strain 1448A / Race 6)), this protein is RNA polymerase-associated protein RapA.